We begin with the raw amino-acid sequence, 178 residues long: Cytidylate kinase 2 (178 aa).

7-15 contacts ATP; the sequence is GKSGCGNTT.

It belongs to the cytidylate kinase family. Type 2 subfamily.

The protein resides in the cytoplasm. The catalysed reaction is CMP + ATP = CDP + ADP. It carries out the reaction dCMP + ATP = dCDP + ADP. This Borreliella afzelii (strain PKo) (Borrelia afzelii) protein is Cytidylate kinase 2.